Consider the following 1353-residue polypeptide: DNA-directed RNA polymerase subunit beta' (1353 aa).

The tract at residues 1–117 (MSDNRLFTSV…AFQKLNDLFK (117 aa)) is unknown. The DNA-directed RNA polymerase subunit beta' stretch occupies residues 118–1353 (LYNHFPSISS…SELAEKTNQN (1236 aa)). The Zn(2+) site is built by Cys-189, Cys-191, Cys-203, and Cys-206. Residues Asp-578, Asp-580, and Asp-582 each coordinate Mg(2+).

The protein belongs to the RNA polymerase beta' chain family. In terms of assembly, the RNAP catalytic core consists of 2 alpha, 1 beta, 1 beta' and 1 omega subunit. When a sigma factor is associated with the core the holoenzyme is formed, which can initiate transcription. It depends on Mg(2+) as a cofactor. Requires Zn(2+) as cofactor.

It carries out the reaction RNA(n) + a ribonucleoside 5'-triphosphate = RNA(n+1) + diphosphate. Its function is as follows. DNA-dependent RNA polymerase catalyzes the transcription of DNA into RNA using the four ribonucleoside triphosphates as substrates. This is DNA-directed RNA polymerase subunit beta' from Onion yellows phytoplasma (strain OY-M).